Reading from the N-terminus, the 845-residue chain is Beta-mannosidase B (845 aa).

The N-linked (GlcNAc...) asparagine glycan is linked to Asn252. Residue Glu432 is the Proton donor of the active site. Asn717 and Asn723 each carry an N-linked (GlcNAc...) asparagine glycan.

This sequence belongs to the glycosyl hydrolase 2 family. Beta-mannosidase B subfamily.

The catalysed reaction is Hydrolysis of terminal, non-reducing beta-D-mannose residues in beta-D-mannosides.. It participates in glycan metabolism; N-glycan degradation. Exoglycosidase that cleaves the single beta-linked mannose residue from the non-reducing end of beta-mannosidic oligosaccharides of various complexity and length. Prefers mannobiose over mannotriose and has no activity against polymeric mannan. Is also severely restricted by galactosyl substitutions at the +1 subsite. The sequence is that of Beta-mannosidase B (mndB) from Aspergillus fumigatus (strain ATCC MYA-4609 / CBS 101355 / FGSC A1100 / Af293) (Neosartorya fumigata).